A 473-amino-acid polypeptide reads, in one-letter code: Aspartyl/glutamyl-tRNA(Asn/Gln) amidotransferase subunit B (473 aa).

It belongs to the GatB/GatE family. GatB subfamily. As to quaternary structure, heterotrimer of A, B and C subunits.

It catalyses the reaction L-glutamyl-tRNA(Gln) + L-glutamine + ATP + H2O = L-glutaminyl-tRNA(Gln) + L-glutamate + ADP + phosphate + H(+). It carries out the reaction L-aspartyl-tRNA(Asn) + L-glutamine + ATP + H2O = L-asparaginyl-tRNA(Asn) + L-glutamate + ADP + phosphate + 2 H(+). Functionally, allows the formation of correctly charged Asn-tRNA(Asn) or Gln-tRNA(Gln) through the transamidation of misacylated Asp-tRNA(Asn) or Glu-tRNA(Gln) in organisms which lack either or both of asparaginyl-tRNA or glutaminyl-tRNA synthetases. The reaction takes place in the presence of glutamine and ATP through an activated phospho-Asp-tRNA(Asn) or phospho-Glu-tRNA(Gln). The chain is Aspartyl/glutamyl-tRNA(Asn/Gln) amidotransferase subunit B from Francisella tularensis subsp. mediasiatica (strain FSC147).